The following is a 316-amino-acid chain: MTVQPTTIGIVGARGHTGAELIKLIAAHPQLQLVFVSSRELAGQRVAEHSDGYEGELRYESLDADAVAAKAADVVILALPNGKAEPFVAAIDASRPQTLLIDLSADYRFDPAWYYGLPELTRHTYAGQRRISNPGCYATAMQLAITPLREQLAGPPQCFGVSGYSGAGTTPSDKNNPALLADNLMPYALTNHMHEREVSAQLGVPVEFMPHVAPHFRGITMTVNLWLQQPLTREQIHARYLERYAHEPLIEIVDEAPWVSRIAGTQGVQIGGFTMAPGNKRVVVVATLDNLLKGAATQAMQNLNLALGWDELTAIG.

Cys-136 is a catalytic residue.

It belongs to the NAGSA dehydrogenase family. Type 1 subfamily.

The protein localises to the cytoplasm. The enzyme catalyses N-acetyl-L-glutamate 5-semialdehyde + phosphate + NADP(+) = N-acetyl-L-glutamyl 5-phosphate + NADPH + H(+). It participates in amino-acid biosynthesis; L-arginine biosynthesis; N(2)-acetyl-L-ornithine from L-glutamate: step 3/4. Functionally, catalyzes the NADPH-dependent reduction of N-acetyl-5-glutamyl phosphate to yield N-acetyl-L-glutamate 5-semialdehyde. The chain is N-acetyl-gamma-glutamyl-phosphate reductase from Xanthomonas campestris pv. campestris (strain ATCC 33913 / DSM 3586 / NCPPB 528 / LMG 568 / P 25).